Here is a 365-residue protein sequence, read N- to C-terminus: Putative carbonic anhydrase-like protein 1 (365 aa).

Residues 1-25 (MRFECSHFPLFLIILTCHISPLKSS) form the signal peptide. The 329-residue stretch at 28–356 (YQWSYDSDVF…TNNRLVRTNI (329 aa)) folds into the Alpha-carbonic anhydrase domain. Residue Y223 is part of the active site. Residues T295 and 295–296 (TS) contribute to the substrate site.

This sequence belongs to the alpha-carbonic anhydrase family.

It is found in the secreted. This is Putative carbonic anhydrase-like protein 1 (cah-1) from Caenorhabditis elegans.